The chain runs to 496 residues: Glycerol kinase (496 aa).

An ADP-binding site is contributed by Thr12. Residues Thr12, Thr13, and Ser14 each contribute to the ATP site. Thr12 provides a ligand contact to sn-glycerol 3-phosphate. Arg16 lines the ADP pocket. Residues Arg82, Glu83, and Tyr134 each contribute to the sn-glycerol 3-phosphate site. Residues Arg82, Glu83, and Tyr134 each coordinate glycerol. Phosphohistidine; by HPr is present on His230. Asp244 is a binding site for sn-glycerol 3-phosphate. Residues Asp244 and Gln245 each contribute to the glycerol site. ADP contacts are provided by Thr266 and Gly309. 4 residues coordinate ATP: Thr266, Gly309, Gln313, and Gly410. ADP-binding residues include Gly410 and Asn414.

The protein belongs to the FGGY kinase family. In terms of assembly, homotetramer and homodimer (in equilibrium). Post-translationally, the phosphoenolpyruvate-dependent sugar phosphotransferase system (PTS), including enzyme I, and histidine-containing protein (HPr) are required for the phosphorylation, which leads to the activation of the enzyme.

It catalyses the reaction glycerol + ATP = sn-glycerol 3-phosphate + ADP + H(+). Its pathway is polyol metabolism; glycerol degradation via glycerol kinase pathway; sn-glycerol 3-phosphate from glycerol: step 1/1. With respect to regulation, activated by phosphorylation and inhibited by fructose 1,6-bisphosphate (FBP). Key enzyme in the regulation of glycerol uptake and metabolism. Catalyzes the phosphorylation of glycerol to yield sn-glycerol 3-phosphate. This is Glycerol kinase from Geobacillus sp. (strain WCH70).